We begin with the raw amino-acid sequence, 193 residues long: Intracellular heme transport protein HutX (193 aa).

Heme is bound at residue Tyr116.

Homodimer. Interacts with HutZ.

The protein localises to the cytoplasm. Its function is as follows. Binds heme. Heme is transferred to the heme-degrading enzyme HutZ via a specific protein-protein interaction. This Vibrio cholerae serotype O1 (strain ATCC 39315 / El Tor Inaba N16961) protein is Intracellular heme transport protein HutX.